The sequence spans 683 residues: Inositol-trisphosphate 3-kinase C (683 aa).

The disordered stretch occupies residues 1–124 (MRRCPCRGSL…PDRSSLRTHL (124 aa)). Residues 13–22 (AEAGALPAAA) are compositionally biased toward low complexity. Residues 44–58 (PGAGAPAGRPEGGGP) are compositionally biased toward gly residues. Residues 105 to 124 (ETERPKQKTEPDRSSLRTHL) show a composition bias toward basic and acidic residues. Phosphoserine occurs at positions 127 and 162. Residues 147–308 (TDPHRSDLQF…EDGPLEEPEP (162 aa)) are disordered. Residues 196 to 206 (WTHQNSSSLQT) are compositionally biased toward polar residues. Positions 249–259 (SQKKQDTEAAR) are enriched in basic and acidic residues. Polar residues predominate over residues 267 to 289 (FQIQQDTDGSWTQPSTDGSQTAP). Residues 297–308 (EPEDGPLEEPEP) show a composition bias toward acidic residues. Residues 324–332 (LCPVPRLII) carry the Nuclear export signal motif. A disordered region spans residues 334 to 387 (PETPEPEAQPVGPPSRVEGGSGGFSSASSFDESEDDVVAGGGGASDPEDRSGSK). T336 is modified (phosphothreonine). Position 404 is a phosphoserine (S404). ATP contacts are provided by residues K431, 471 to 473 (EDL), and D484. Substrate is bound by residues K486, 507–513 (RKDMYEK), and 534–541 (KPRYMQWR). Positions 509 to 517 (DMYEKMVAV) are calmodulin-binding. ATP is bound by residues K558 and D638. Position 641 (K641) interacts with substrate.

Belongs to the inositol phosphokinase (IPK) family. Highly expressed in pancreas, skeletal muscle, liver, placenta and weakly in kidney and brain.

The protein localises to the nucleus. It is found in the cytoplasm. It catalyses the reaction 1D-myo-inositol 1,4,5-trisphosphate + ATP = 1D-myo-inositol 1,3,4,5-tetrakisphosphate + ADP + H(+). With respect to regulation, activated by calcium/calmodulin. Inhibited by high concentrations of the substrate Ins(1,2,4)P3, and allosterically activated by the product Ins(1,3,4,5)P4. Its function is as follows. Catalyzes the phosphorylation of 1D-myo-inositol 1,4,5-trisphosphate (InsP3) into 1D-myo-inositol 1,3,4,5-tetrakisphosphate and participates to the regulation of calcium homeostasis. Can phosphorylate inositol 2,4,5-triphosphate to inositol 2,4,5,6-tetraphosphate. The protein is Inositol-trisphosphate 3-kinase C of Homo sapiens (Human).